A 270-amino-acid chain; its full sequence is Putative pyruvate, phosphate dikinase regulatory protein 2 (270 aa).

Position 151 to 158 (151 to 158) interacts with ADP; that stretch reads GVSRTSKT.

It belongs to the pyruvate, phosphate/water dikinase regulatory protein family. PDRP subfamily.

The catalysed reaction is N(tele)-phospho-L-histidyl/L-threonyl-[pyruvate, phosphate dikinase] + ADP = N(tele)-phospho-L-histidyl/O-phospho-L-threonyl-[pyruvate, phosphate dikinase] + AMP + H(+). The enzyme catalyses N(tele)-phospho-L-histidyl/O-phospho-L-threonyl-[pyruvate, phosphate dikinase] + phosphate + H(+) = N(tele)-phospho-L-histidyl/L-threonyl-[pyruvate, phosphate dikinase] + diphosphate. In terms of biological role, bifunctional serine/threonine kinase and phosphorylase involved in the regulation of the pyruvate, phosphate dikinase (PPDK) by catalyzing its phosphorylation/dephosphorylation. In Listeria welshimeri serovar 6b (strain ATCC 35897 / DSM 20650 / CCUG 15529 / CIP 8149 / NCTC 11857 / SLCC 5334 / V8), this protein is Putative pyruvate, phosphate dikinase regulatory protein 2.